We begin with the raw amino-acid sequence, 811 residues long: Serine/threonine-protein kinase prpf4B (811 aa).

Disordered stretches follow at residues 1–257 (MVIE…TNEP), 288–341 (EKYN…NQIE), 353–379 (KDQN…EDLK), and 408–452 (VSIK…TNGG). The span at 46 to 71 (SSPASRETSSSKLMSPSKNQSSSSSR) shows a compositional bias: low complexity. Residues 81–202 (RRKDERYSSS…DNMDSRDNKN (122 aa)) are compositionally biased toward basic and acidic residues. Residues 203-215 (GSRQSINNNTLSY) are compositionally biased toward polar residues. The span at 217 to 240 (KQADRKDEVRVKDNISVNDDKTNH) shows a compositional bias: basic and acidic residues. Polar residues-rich tracts occupy residues 241 to 257 (GENL…TNEP) and 293 to 302 (EQPQPITSSL). Residues 310 to 327 (SNTNTNSNSTPVATTTTS) are compositionally biased toward low complexity. In terms of domain architecture, Protein kinase spans 490-808 (YQIFSPIGSG…PFEALNHEFL (319 aa)). Residues 496–504 (IGSGVFSTV) and Lys-519 each bind ATP. The active-site Proton acceptor is the Asp-619.

It belongs to the protein kinase superfamily. CMGC Ser/Thr protein kinase family. Post-translationally, phosphorylated. Autophosphorylated; phosphorylation inhibits interaction with its targets.

The protein localises to the nucleus. The protein resides in the chromosome. It localises to the centromere. Its subcellular location is the kinetochore. It carries out the reaction L-seryl-[protein] + ATP = O-phospho-L-seryl-[protein] + ADP + H(+). It catalyses the reaction L-threonyl-[protein] + ATP = O-phospho-L-threonyl-[protein] + ADP + H(+). In terms of biological role, serine/threonine kinase involved in spliceosomal assembly as well as mitosis and signaling regulation. The sequence is that of Serine/threonine-protein kinase prpf4B (prp4k) from Dictyostelium discoideum (Social amoeba).